Reading from the N-terminus, the 342-residue chain is Heat-inducible transcription repressor HrcA (342 aa).

Belongs to the HrcA family.

In terms of biological role, negative regulator of class I heat shock genes (grpE-dnaK-dnaJ and groELS operons). Prevents heat-shock induction of these operons. This is Heat-inducible transcription repressor HrcA from Leptospira borgpetersenii serovar Hardjo-bovis (strain JB197).